Reading from the N-terminus, the 444-residue chain is Sensor protein CiaH (444 aa).

2 helical membrane-spanning segments follow: residues Phe21 to Ser41 and Leu183 to Ala203. Residues Asn223–Thr438 form the Histidine kinase domain. A Phosphohistidine; by autocatalysis modification is found at His226.

The protein resides in the cell membrane. It catalyses the reaction ATP + protein L-histidine = ADP + protein N-phospho-L-histidine.. Member of the two-component regulatory system CiaH/CiaR. Involved in early steps of competence regulation and in penicillin susceptibility. Probably phosphorylates CiaR. The sequence is that of Sensor protein CiaH (ciaH) from Streptococcus pneumoniae serotype 4 (strain ATCC BAA-334 / TIGR4).